The sequence spans 909 residues: Protein translocase subunit SecA (909 aa).

ATP is bound by residues Q87, 105–109, and D507; that span reads GEGKT. Positions 834–909 are disordered; that stretch reads EAVEEQRRRQ…KYKQCCGKLS (76 aa). The segment covering 837-848 has biased composition (basic and acidic residues); it reads EEQRRRQGDMQY. The span at 859–871 shows a compositional bias: gly residues; sequence QGAGGEGAAGGTA. 4 residues coordinate Zn(2+): C893, C895, C904, and C905.

The protein belongs to the SecA family. In terms of assembly, monomer and homodimer. Part of the essential Sec protein translocation apparatus which comprises SecA, SecYEG and auxiliary proteins SecDF-YajC and YidC. Zn(2+) is required as a cofactor.

The protein resides in the cell inner membrane. It localises to the cytoplasm. The enzyme catalyses ATP + H2O + cellular proteinSide 1 = ADP + phosphate + cellular proteinSide 2.. Part of the Sec protein translocase complex. Interacts with the SecYEG preprotein conducting channel. Has a central role in coupling the hydrolysis of ATP to the transfer of proteins into and across the cell membrane, serving both as a receptor for the preprotein-SecB complex and as an ATP-driven molecular motor driving the stepwise translocation of polypeptide chains across the membrane. This chain is Protein translocase subunit SecA, found in Alkalilimnicola ehrlichii (strain ATCC BAA-1101 / DSM 17681 / MLHE-1).